The chain runs to 386 residues: Succinate--CoA ligase [ADP-forming] subunit beta (386 aa).

In terms of domain architecture, ATP-grasp spans K9 to R244. ATP contacts are provided by residues K46, G53–G55, E99, T102, and E107. The Mg(2+) site is built by N199 and D213. Residues N264 and G321–V323 contribute to the substrate site.

Belongs to the succinate/malate CoA ligase beta subunit family. As to quaternary structure, heterotetramer of two alpha and two beta subunits. Mg(2+) serves as cofactor.

The catalysed reaction is succinate + ATP + CoA = succinyl-CoA + ADP + phosphate. The enzyme catalyses GTP + succinate + CoA = succinyl-CoA + GDP + phosphate. It participates in carbohydrate metabolism; tricarboxylic acid cycle; succinate from succinyl-CoA (ligase route): step 1/1. Its function is as follows. Succinyl-CoA synthetase functions in the citric acid cycle (TCA), coupling the hydrolysis of succinyl-CoA to the synthesis of either ATP or GTP and thus represents the only step of substrate-level phosphorylation in the TCA. The beta subunit provides nucleotide specificity of the enzyme and binds the substrate succinate, while the binding sites for coenzyme A and phosphate are found in the alpha subunit. In Thioalkalivibrio sulfidiphilus (strain HL-EbGR7), this protein is Succinate--CoA ligase [ADP-forming] subunit beta.